A 382-amino-acid polypeptide reads, in one-letter code: Protein phosphatase 1A (382 aa).

Glycine 2 carries the N-myristoyl glycine lipid modification. The PPM-type phosphatase domain occupies 23-291 (RYGLSSMQGW…DNMSVILICF (269 aa)). Residues aspartate 60, glycine 61, aspartate 239, and aspartate 282 each contribute to the Mn(2+) site. Phosphoserine occurs at positions 375 and 377.

This sequence belongs to the PP2C family. In terms of assembly, monomer. Interacts with SMAD2; the interaction dephosphorylates SMAD2 in its C-terminal SXS motif resulting in disruption of the SMAD2/SMAD4 complex, SMAD2 nuclear export and termination of the TGF-beta-mediated signaling. Interacts with SMAD2; the interaction dephosphorylates SMAD2 in its C-terminal SXS motif resulting in disruption of the SMAD2/SMAD4 complex, SMAD2 nuclear export and termination of the TGF-beta-mediated signaling. Interacts with the phosphorylated form of IKBKB/IKKB. Mg(2+) serves as cofactor. Mn(2+) is required as a cofactor. In terms of processing, N-myristoylation is essential for the recognition of its substrates for dephosphorylation.

It is found in the nucleus. Its subcellular location is the cytoplasm. The protein localises to the cytosol. The protein resides in the membrane. It carries out the reaction O-phospho-L-seryl-[protein] + H2O = L-seryl-[protein] + phosphate. The catalysed reaction is O-phospho-L-threonyl-[protein] + H2O = L-threonyl-[protein] + phosphate. Its function is as follows. Enzyme with a broad specificity. Negatively regulates TGF-beta signaling through dephosphorylating SMAD2 and SMAD3, resulting in their dissociation from SMAD4, nuclear export of the SMADs and termination of the TGF-beta-mediated signaling. Dephosphorylates PRKAA1 and PRKAA2. Plays an important role in the termination of TNF-alpha-mediated NF-kappa-B activation through dephosphorylating and inactivating IKBKB/IKKB. This is Protein phosphatase 1A (Ppm1a) from Mus musculus (Mouse).